The following is a 633-amino-acid chain: Kelch repeat and BTB domain-containing protein 11 (633 aa).

The interval 1–118 is disordered; sequence MENSVAPFVL…EDPPSRHEHA (118 aa). The segment covering 35 to 60 has biased composition (polar residues); sequence STAQTPCSLSASLCFSSGDDSPPQSR. The segment covering 61–73 has biased composition (low complexity); it reads ASAAEGSEASPPS. Residues serine 70, serine 73, serine 92, serine 95, serine 107, and serine 113 each carry the phosphoserine modification. The region spanning 146 to 206 is the BTB domain; sequence PDLVIEVAGR…AYSGRMAGVR (61 aa). Kelch repeat units follow at residues 317–365, 366–418, 419–463, and 465–506; these read RPQS…VLFN, YLFL…ALDG, HLYA…TCNG, and IYVS…ALDG.

This Mus musculus (Mouse) protein is Kelch repeat and BTB domain-containing protein 11 (Kbtbd11).